The primary structure comprises 654 residues: Fructose-1,6-bisphosphatase class 3 (654 aa).

Residues 288–307 (NPAFKPKKRPDKHERLTQRE) form a disordered region. Basic and acidic residues predominate over residues 298–307 (DKHERLTQRE).

Belongs to the FBPase class 3 family. Requires Mn(2+) as cofactor.

It catalyses the reaction beta-D-fructose 1,6-bisphosphate + H2O = beta-D-fructose 6-phosphate + phosphate. It functions in the pathway carbohydrate biosynthesis; gluconeogenesis. In Staphylococcus aureus (strain Mu3 / ATCC 700698), this protein is Fructose-1,6-bisphosphatase class 3.